The chain runs to 98 residues: Putative septation protein SpoVG (98 aa).

The protein belongs to the SpoVG family.

Its function is as follows. Essential for sporulation. Interferes with or is a negative regulator of the pathway leading to asymmetric septation. This is Putative septation protein SpoVG from Bacillus pumilus (strain SAFR-032).